The sequence spans 152 residues: Ribosome maturation factor RimP (152 aa).

Belongs to the RimP family.

The protein localises to the cytoplasm. In terms of biological role, required for maturation of 30S ribosomal subunits. This is Ribosome maturation factor RimP from Ruminiclostridium cellulolyticum (strain ATCC 35319 / DSM 5812 / JCM 6584 / H10) (Clostridium cellulolyticum).